A 688-amino-acid polypeptide reads, in one-letter code: Probable glucan endo-1,3-beta-glucosidase btgC (688 aa).

Disordered regions lie at residues 1–91, 126–148, and 168–195; these read MSGP…NLGP, ANIP…PEPP, and GQLT…IPYQ. At 1-307 the chain is on the cytoplasmic side; that stretch reads MSGPNRTYSF…PKPGGGNKKR (307 aa). Residues 175 to 188 show a composition bias toward polar residues; sequence SVSHLSSTNPSQRN. The helical; Signal-anchor for type II membrane protein transmembrane segment at 308 to 328 threads the bilayer; it reads GWIVGAILAFIIIGAIVGGAV. Topologically, residues 329–688 are extracellular; the sequence is GGTIGHRGNE…IPDCGGKTAT (360 aa). Positions 334–363 are disordered; that stretch reads HRGNEEPSSASSASSSSTQTATEDTSVNGD. A compositionally biased stretch (low complexity) spans 341–355; it reads SSASSASSSSTQTAT. 3 N-linked (GlcNAc...) asparagine glycosylation sites follow: N408, N431, and N459. The active-site Proton donor is the E491. Residue E590 is the Nucleophile of the active site. Residues N609 and N635 are each glycosylated (N-linked (GlcNAc...) asparagine).

Belongs to the glycosyl hydrolase 17 family.

It is found in the cell membrane. It carries out the reaction Hydrolysis of (1-&gt;3)-beta-D-glucosidic linkages in (1-&gt;3)-beta-D-glucans.. In terms of biological role, glucanases play a role in cell expansion during growth, in cell-cell fusion during mating, and in spore release during sporulation. This enzyme may be involved in beta-glucan degradation. Active on laminarin and lichenan. The polypeptide is Probable glucan endo-1,3-beta-glucosidase btgC (btgC) (Aspergillus fumigatus (strain ATCC MYA-4609 / CBS 101355 / FGSC A1100 / Af293) (Neosartorya fumigata)).